A 267-amino-acid polypeptide reads, in one-letter code: MSIVSYEPKVSDFLNLSKKEEILPKALTRLKTVSISTKDIISVKESETLCDIDLLINVPLDKYRYVGILGAVFTGEWLVPDFVKGGVTISVIDKRLVNSKECVIGTYRAAAKSKRFQFKLVPNYFVSTVDAKRKPWQVHVRIQDLKIEAGWQPLALEVVSVAMVTNNVVMKGLREKVVAINDPDVEGFEGVVDEFVDSVAAFKAVDNFRKRKKKVEERDVVSKYKYRPEKYAGPDSFNLKEENVLQHYKPESVPVLRSGVGRAHTNA.

The protein belongs to the tobamovirus movement protein family.

Its subcellular location is the host cytoplasm. The protein localises to the host cytoskeleton. The protein resides in the host cell junction. It localises to the host plasmodesma. Its function is as follows. Transports viral genome to neighboring plant cells directly through plasmosdesmata, without any budding. The movement protein allows efficient cell to cell propagation, by bypassing the host cell wall barrier. Forms a ribonucleoprotein complex with viral RNA. Binds microtubules and modulates microtubule stability. Can bind double-stranded DNA. The chain is Movement protein (MP) from Brassicaceae (TVCV).